We begin with the raw amino-acid sequence, 207 residues long: Large ribosomal subunit protein uL4 (207 aa).

Residues 50–76 (AVKNRSAVSGGGRKPWKQKGTGRARQG) form a disordered region.

It belongs to the universal ribosomal protein uL4 family. As to quaternary structure, part of the 50S ribosomal subunit.

One of the primary rRNA binding proteins, this protein initially binds near the 5'-end of the 23S rRNA. It is important during the early stages of 50S assembly. It makes multiple contacts with different domains of the 23S rRNA in the assembled 50S subunit and ribosome. In terms of biological role, forms part of the polypeptide exit tunnel. This chain is Large ribosomal subunit protein uL4, found in Staphylococcus aureus (strain MRSA252).